The primary structure comprises 642 residues: Conserved oligomeric Golgi complex subunit 6 (642 aa).

Belongs to the COG6 family. Component of the conserved oligomeric Golgi complex which is composed of eight different subunits and is required for normal Golgi morphology and localization.

The protein resides in the golgi apparatus membrane. In terms of biological role, required for normal Golgi function. This Caenorhabditis elegans protein is Conserved oligomeric Golgi complex subunit 6 (cogc-6).